Reading from the N-terminus, the 201-residue chain is Guanylyl cyclase-activating protein 1 (201 aa).

Gly-2 is lipidated: N-myristoyl glycine. The residue at position 3 (Asn-3) is a Deamidated asparagine. EF-hand domains are found at residues 31–49 (SGQLTLYEFRQFFGLKNLS), 51–86 (SASQYVEQMFETFDFNKDGYIDFMEYVAALSLVLKG), 87–122 (KVEQKLRWYFKLYDVDGNGCIDRDELLTIIQAIRAI), and 131–166 (TAEEFTDTVFSKIDVNGDGELSLEEFIEGVQKDQML). The Ca(2+) site is built by Asp-64, Asn-66, Asp-68, Tyr-70, Glu-75, Asp-100, Asp-102, Asn-104, Cys-106, Glu-111, Asp-144, Asn-146, Asp-148, Glu-150, and Glu-155.

As to quaternary structure, homodimer. In terms of tissue distribution, in the retina, it is expressed in rod and cone photoreceptors.

The protein resides in the membrane. Its subcellular location is the photoreceptor inner segment. It is found in the cell projection. It localises to the cilium. The protein localises to the photoreceptor outer segment. Stimulates retinal guanylyl cyclase when free calcium ions concentration is low and inhibits guanylyl cyclase when free calcium ions concentration is elevated. This Ca(2+)-sensitive regulation of retinal guanylyl cyclase is a key event in recovery of the dark state of rod photoreceptors following light exposure. May be involved in cone photoreceptor light response and recovery of response in bright light. This is Guanylyl cyclase-activating protein 1 (GUCA1A) from Homo sapiens (Human).